A 219-amino-acid polypeptide reads, in one-letter code: Outer spore wall protein 4 (219 aa).

The N-terminal stretch at 1–19 (MRFQLFIYFYFTIVVIAGT) is a signal peptide. The Extracellular portion of the chain corresponds to 20 to 170 (NTIQQFSDAG…KKKRLDRIKR (151 aa)). 3 N-linked (GlcNAc...) asparagine glycosylation sites follow: Asn42, Asn62, and Asn136. A helical transmembrane segment spans residues 171–191 (ILTVSLLELGLAQGVADLCAV). Residues 192 to 193 (AP) are Cytoplasmic-facing. Residues 194-214 (FACLLGVTVGSIGFIFWLALI) traverse the membrane as a helical segment. The Extracellular portion of the chain corresponds to 215–219 (YNAIQ).

This sequence belongs to the OSW4/6 family. Post-translationally, N-glycosylated.

The protein localises to the membrane. Its function is as follows. Involved in spore wall assembly. May be involved in maintaining genome integrity. In Saccharomyces cerevisiae (strain ATCC 204508 / S288c) (Baker's yeast), this protein is Outer spore wall protein 4.